The primary structure comprises 197 residues: Putative carbonic anhydrase YvdA (197 aa).

C41, D43, H99, and C102 together coordinate Zn(2+).

It belongs to the beta-class carbonic anhydrase family. Zn(2+) is required as a cofactor.

It catalyses the reaction hydrogencarbonate + H(+) = CO2 + H2O. Reversible hydration of carbon dioxide. The sequence is that of Putative carbonic anhydrase YvdA (yvdA) from Bacillus subtilis (strain 168).